The chain runs to 145 residues: Basic phospholipase A2 cPt09 (145 aa).

A signal peptide spans Met1–Thr21. Positions Ile22 to Leu27 are excised as a propeptide. 7 disulfides stabilise this stretch: Cys38–Cys98, Cys54–Cys144, Cys56–Cys72, Cys71–Cys125, Cys78–Cys118, Cys87–Cys111, and Cys105–Cys116. Ca(2+)-binding residues include Tyr55, Gly57, and Gly59. His75 is an active-site residue. Asp76 contributes to the Ca(2+) binding site. Asp119 is an active-site residue.

Belongs to the phospholipase A2 family. Group I subfamily. D49 sub-subfamily. It depends on Ca(2+) as a cofactor. As to expression, expressed by the venom gland.

It localises to the secreted. It catalyses the reaction a 1,2-diacyl-sn-glycero-3-phosphocholine + H2O = a 1-acyl-sn-glycero-3-phosphocholine + a fatty acid + H(+). Functionally, PLA2 catalyzes the calcium-dependent hydrolysis of the 2-acyl groups in 3-sn-phosphoglycerides. The polypeptide is Basic phospholipase A2 cPt09 (Laticauda semifasciata (Black-banded sea krait)).